Consider the following 259-residue polypeptide: Ribonuclease HII (259 aa).

In terms of domain architecture, RNase H type-2 spans 70–258 (TLIAGIDEVG…VKSLVLGKKE (189 aa)). Residues Asp-76, Glu-77, and Asp-168 each coordinate a divalent metal cation.

It belongs to the RNase HII family. Requires Mn(2+) as cofactor. The cofactor is Mg(2+).

The protein resides in the cytoplasm. It catalyses the reaction Endonucleolytic cleavage to 5'-phosphomonoester.. Its function is as follows. Endonuclease that specifically degrades the RNA of RNA-DNA hybrids. The protein is Ribonuclease HII of Streptococcus pneumoniae (strain P1031).